Consider the following 198-residue polypeptide: Phosphoheptose isomerase (198 aa).

The region spanning 36–195 is the SIS domain; the sequence is AIEVYQNGNK…EEAIFRNKFV (160 aa). 51 to 53 contributes to the substrate binding site; sequence NGG. Zn(2+)-binding residues include H60 and E64. Residues E64, 93–94, 119–121, S124, and Q171 contribute to the substrate site; these read ND and STS. Residues Q171 and H179 each contribute to the Zn(2+) site.

This sequence belongs to the SIS family. GmhA subfamily. Zn(2+) serves as cofactor.

It localises to the cytoplasm. The catalysed reaction is 2 D-sedoheptulose 7-phosphate = D-glycero-alpha-D-manno-heptose 7-phosphate + D-glycero-beta-D-manno-heptose 7-phosphate. Its pathway is carbohydrate biosynthesis; D-glycero-D-manno-heptose 7-phosphate biosynthesis; D-glycero-alpha-D-manno-heptose 7-phosphate and D-glycero-beta-D-manno-heptose 7-phosphate from sedoheptulose 7-phosphate: step 1/1. The protein operates within cell surface structure biogenesis; S-layer biogenesis. Catalyzes the isomerization of sedoheptulose 7-phosphate in D-glycero-D-manno-heptose 7-phosphate. The protein is Phosphoheptose isomerase of Aneurinibacillus thermoaerophilus.